A 374-amino-acid polypeptide reads, in one-letter code: Methylthioribose-1-phosphate isomerase (374 aa).

Catalysis depends on aspartate 251, which acts as the Proton donor.

Belongs to the eIF-2B alpha/beta/delta subunits family. MtnA subfamily.

Its subcellular location is the cytoplasm. The protein localises to the nucleus. The catalysed reaction is 5-(methylsulfanyl)-alpha-D-ribose 1-phosphate = 5-(methylsulfanyl)-D-ribulose 1-phosphate. The protein operates within amino-acid biosynthesis; L-methionine biosynthesis via salvage pathway; L-methionine from S-methyl-5-thio-alpha-D-ribose 1-phosphate: step 1/6. In terms of biological role, catalyzes the interconversion of methylthioribose-1-phosphate (MTR-1-P) into methylthioribulose-1-phosphate (MTRu-1-P). The sequence is that of Methylthioribose-1-phosphate isomerase (IDI2) from Oryza sativa subsp. japonica (Rice).